We begin with the raw amino-acid sequence, 197 residues long: Probable GTP-binding protein EngB (197 aa).

The EngB-type G domain occupies 22-197; it reads TGVEVAFAGR…LKEKLDIWYQ (176 aa). Residues 30 to 37, 57 to 61, 75 to 78, 142 to 145, and 177 to 179 contribute to the GTP site; these read GRSNAGKS, GRTQL, DLPG, TKAD, and FSS. Mg(2+) is bound by residues serine 37 and threonine 59.

The protein belongs to the TRAFAC class TrmE-Era-EngA-EngB-Septin-like GTPase superfamily. EngB GTPase family. Mg(2+) serves as cofactor.

Necessary for normal cell division and for the maintenance of normal septation. This is Probable GTP-binding protein EngB from Francisella philomiragia subsp. philomiragia (strain ATCC 25017 / CCUG 19701 / FSC 153 / O#319-036).